The following is a 321-amino-acid chain: MTKYALVGDVGGTNARLALCDIDTGEISQAKTYSGLDYPSLEAVVRVYLDEHQVGVEDGCIAIACPITGDWVAMTNHTWAFSIAEMKKNLGFAHLEIINDFTAVSMAIPMLKPEHLIQFGGAEPVEGKPIAVYGAGTGLGVSHLVHVDKRWISLPGEGGHVDFAPNSEEEGIILHELRAELGHVSAERVLSGPGLVYLYRAIVKSDNRLPENLQPKDITERALADSCTDCRRALSLFCVIMGRFGGNLALNLGTFGGVYIAGGIVPRFLEFFKASGFRGGFEDKGRFKSYVQDIPVYLIVHDNPGLLGSGAHLRQTLGQYL.

8–13 (GDVGGT) lines the ATP pocket.

It belongs to the bacterial glucokinase family.

The protein resides in the cytoplasm. The catalysed reaction is D-glucose + ATP = D-glucose 6-phosphate + ADP + H(+). The sequence is that of Glucokinase from Enterobacter sp. (strain 638).